Consider the following 183-residue polypeptide: Glutamyl-tRNA(Gln) amidotransferase subunit F, mitochondrial (183 aa).

The transit peptide at 1–23 (MSRMLNQIPRLITRSFRTSSVGY) directs the protein to the mitochondrion.

Belongs to the GatF family. As to quaternary structure, subunit of the heterotrimeric GatFAB amidotransferase (AdT) complex, composed of A, B and F subunits.

It localises to the mitochondrion inner membrane. It carries out the reaction L-glutamyl-tRNA(Gln) + L-glutamine + ATP + H2O = L-glutaminyl-tRNA(Gln) + L-glutamate + ADP + phosphate + H(+). In terms of biological role, allows the formation of correctly charged Gln-tRNA(Gln) through the transamidation of misacylated Glu-tRNA(Gln) in the mitochondria. The reaction takes place in the presence of glutamine and ATP through an activated gamma-phospho-Glu-tRNA(Gln). Required for proper protein synthesis within the mitochondrion. The sequence is that of Glutamyl-tRNA(Gln) amidotransferase subunit F, mitochondrial from Debaryomyces hansenii (strain ATCC 36239 / CBS 767 / BCRC 21394 / JCM 1990 / NBRC 0083 / IGC 2968) (Yeast).